A 276-amino-acid chain; its full sequence is Outer membrane lipoprotein 2 (276 aa).

The N-terminal stretch at 1-19 is a signal peptide; the sequence is MNFKKLLGVALVSALALTA. Residue Cys20 is the site of N-palmitoyl cysteine attachment. Residue Cys20 is the site of S-diacylglycerol cysteine attachment.

This sequence belongs to the NlpA lipoprotein family.

The protein localises to the cell outer membrane. The sequence is that of Outer membrane lipoprotein 2 (plpB) from Mannheimia haemolytica (Pasteurella haemolytica).